We begin with the raw amino-acid sequence, 354 residues long: Rhodopsin (354 aa).

Residues 1 to 36 (MNGTEGPNFYIPMSNKTGVVRSPFDYPQYYLAEPWK) are Extracellular-facing. N2 carries N-linked (GlcNAc...) (hybrid) asparagine glycosylation. The N-linked (GlcNAc...) asparagine glycan is linked to N15. A helical transmembrane segment spans residues 37 to 61 (YSVLAAYMFLLILLGLPINFMTLYV). Residues 62–73 (TIQHKKLRTPLN) are Cytoplasmic-facing. The chain crosses the membrane as a helical span at residues 74–96 (YILLNLGVCNHFMVLCGFTITMY). Over 97-110 (TSLHGYFVFGQTGC) the chain is Extracellular. C110 and C187 are joined by a disulfide. Residues 111–133 (YFEGFFATLGGEIALWSLVVLAI) traverse the membrane as a helical segment. A 'Ionic lock' involved in activated form stabilization motif is present at residues 134–136 (ERY). The Cytoplasmic segment spans residues 134–152 (ERYIVVCKPMSNFRFGENH). A helical transmembrane segment spans residues 153–173 (AMMGVAFTWIMALACAVPPLF). The Extracellular portion of the chain corresponds to 174-202 (GWSRYIPEGMQCSCGVDYYTLKPEVNNES). The helical transmembrane segment at 203–224 (FVIYMFVVHFLIPLIIISFCYG) threads the bilayer. At 225–252 (RLVCTVKEAAAQQQESATTQKAEKEVTR) the chain is on the cytoplasmic side. A helical membrane pass occupies residues 253–274 (MVIIMVIFFLICWVPYAYVAFY). Residues 275–286 (IFTHQGSEFGPI) lie on the Extracellular side of the membrane. A helical membrane pass occupies residues 287-308 (FMTVPAFFAKSSAIYNPVIYIM). An N6-(retinylidene)lysine modification is found at K296. Topologically, residues 309–354 (LNKQFRNCMITTLCCGKNPFGDDDASSAATSKTEATSVSTSQVSPA) are cytoplasmic. Residues C322 and C323 are each lipidated (S-palmitoyl cysteine). The tract at residues 332–354 (DASSAATSKTEATSVSTSQVSPA) is disordered. Over residues 334-354 (SSAATSKTEATSVSTSQVSPA) the composition is skewed to low complexity.

Belongs to the G-protein coupled receptor 1 family. Opsin subfamily. Post-translationally, contains one covalently linked retinal chromophore. Upon light absorption, the covalently bound 11-cis-retinal is converted to all-trans-retinal. After hydrolysis of the Schiff base and release of the covalently bound all-trans-retinal, active rhodopsin is regenerated by binding of a fresh molecule of 11-cis-retinal. In terms of tissue distribution, detected in retina rod photoreceptor cell outer segments (at protein level). Detected in retina.

It is found in the membrane. The protein resides in the cell projection. Its subcellular location is the cilium. It localises to the photoreceptor outer segment. Photoreceptor required for image-forming vision at low light intensity. Required for photoreceptor cell viability after birth. Light-induced isomerization of 11-cis to all-trans retinal triggers a conformational change that activates signaling via G-proteins. Subsequent receptor phosphorylation mediates displacement of the bound G-protein alpha subunit by arrestin and terminates signaling. This chain is Rhodopsin (RHO), found in Lithobates pipiens (Northern leopard frog).